Here is an 855-residue protein sequence, read N- to C-terminus: Discoidin domain-containing receptor 2 (855 aa).

A signal peptide spans 1-21 (MILIPRMLLVLFLLLPILSSA). The Extracellular segment spans residues 22 to 399 (KAQVNPAICR…MLKVDDSNTR (378 aa)). The F5/8 type C domain occupies 30–185 (CRYPLGMSGG…VCMRVELYGC (156 aa)). Intrachain disulfides connect cysteine 30–cysteine 185 and cysteine 73–cysteine 177. Asparagine 121, asparagine 213, asparagine 261, asparagine 280, and asparagine 372 each carry an N-linked (GlcNAc...) asparagine glycan. A helical transmembrane segment spans residues 400-421 (ILIGCLVAIIFILLAIIVIILW). Over 422–855 (RQFWQKMLEK…HLLLLQQGDE (434 aa)) the chain is Cytoplasmic. A disordered region spans residues 452–471 (SMFNNNRSSSPSEQGSNSTY). At tyrosine 471 the chain carries Phosphotyrosine; by SRC and autocatalysis. The Protein kinase domain occupies 563-849 (LTFKEKLGEG…PSFQEIHLLL (287 aa)). Residues 569–577 (LGEGQFGEV) and lysine 608 contribute to the ATP site. Aspartate 710 (proton acceptor) is an active-site residue. Tyrosine 736, tyrosine 740, and tyrosine 741 each carry phosphotyrosine; by SRC and autocatalysis.

The protein belongs to the protein kinase superfamily. Tyr protein kinase family. Insulin receptor subfamily. As to quaternary structure, binds hydroxyproline-rich sequence motifs in fibrillar, glycosylated collagen, such as the GQOGVMGFO motif, where O stands for hydroxyproline. Interacts with SRC. Interacts (tyrosine phosphorylated) with SHC1. N-glycosylated. Post-translationally, tyrosine phosphorylated in response to collagen binding. Phosphorylated by SRC; this is required for activation and subsequent autophosphorylation on additional tyrosine residues. As to expression, detected in osteocytes, osteoblastic cells in subchondral bone, bone lining cells, tibia and cartilage (at protein level). Detected at high levels in heart and lung, and at low levels in brain, placenta, liver, skeletal muscle, pancreas, and kidney.

It is found in the cell membrane. The catalysed reaction is L-tyrosyl-[protein] + ATP = O-phospho-L-tyrosyl-[protein] + ADP + H(+). With respect to regulation, present in an inactive state in the absence of collagen binding and phosphorylation by SRC. Tyrosine phosphorylation enhances the affinity for ATP and the catalytic activity. Its function is as follows. Tyrosine kinase involved in the regulation of tissues remodeling. It functions as a cell surface receptor for fibrillar collagen and regulates cell differentiation, remodeling of the extracellular matrix, cell migration and cell proliferation. Required for normal bone development. Regulates osteoblast differentiation and chondrocyte maturation via a signaling pathway that involves MAP kinases and leads to the activation of the transcription factor RUNX2. Regulates remodeling of the extracellular matrix by up-regulation of the collagenases MMP1, MMP2 and MMP13, and thereby facilitates cell migration and tumor cell invasion. Promotes fibroblast migration and proliferation, and thereby contributes to cutaneous wound healing. This Homo sapiens (Human) protein is Discoidin domain-containing receptor 2 (DDR2).